Consider the following 277-residue polypeptide: Hemin import ATP-binding protein HmuV (277 aa).

An ABC transporter domain is found at 25–260 (IHAQGLNLIL…DIIERVYGWP (236 aa)). 57–64 (GPNGAGKS) lines the ATP pocket.

Belongs to the ABC transporter superfamily. Heme (hemin) importer (TC 3.A.1.14.5) family. In terms of assembly, the complex is composed of two ATP-binding proteins (HmuV), two transmembrane proteins (HmuU) and a solute-binding protein (HmuT).

Its subcellular location is the cell inner membrane. Its function is as follows. Part of the ABC transporter complex HmuTUV involved in hemin import. Responsible for energy coupling to the transport system. This is Hemin import ATP-binding protein HmuV from Photobacterium profundum (strain SS9).